A 23-amino-acid polypeptide reads, in one-letter code: Hemocyanin subunit 4 (23 aa).

This sequence belongs to the tyrosinase family. Hemocyanin subfamily. As to expression, hemolymph.

Its subcellular location is the secreted. The protein resides in the extracellular space. Functionally, hemocyanins are copper-containing oxygen carriers occurring freely dissolved in the hemolymph of many mollusks and arthropods. In Carcinus maenas (Common shore crab), this protein is Hemocyanin subunit 4.